The primary structure comprises 508 residues: uncharacterized protein (508 aa).

The protein localises to the virion. This is an uncharacterized protein from Acanthamoeba polyphaga mimivirus (APMV).